A 308-amino-acid polypeptide reads, in one-letter code: MRQLFVLDPLQCIQPAKDSSAALMQAAQRASIEVWACTPADLQARGDQLSAIAVPVVAEPWISTGEPRSLPLTDFACIWMRKDPPVDEGYLYATHLLELAERAGVCVLNRPAALRAWNEKLGALRFNNLMAPTLVASRVSELAAFAREQEEVVLKPLGGRAGQGLVRVAGAAPGLEALLELVTDQEQLPVMVQRFLPAVIEGDKRILLVDGEPLGAVNRRPKAGDFRSNLAMGGRPEPTELDSRELQICAELAPVLREQGLFFVGIDVIDGLLSEINVTSPTGIREVERLKGVPLADQVIARLLVSLG.

The region spanning 120–304 is the ATP-grasp domain; it reads KLGALRFNNL…LADQVIARLL (185 aa). 146-202 provides a ligand contact to ATP; the sequence is AREQEEVVLKPLGGRAGQGLVRVAGAAPGLEALLELVTDQEQLPVMVQRFLPAVIEG. Residues E275 and N277 each coordinate Mg(2+).

It belongs to the prokaryotic GSH synthase family. It depends on Mg(2+) as a cofactor. Requires Mn(2+) as cofactor.

It catalyses the reaction gamma-L-glutamyl-L-cysteine + glycine + ATP = glutathione + ADP + phosphate + H(+). It functions in the pathway sulfur metabolism; glutathione biosynthesis; glutathione from L-cysteine and L-glutamate: step 2/2. This is Glutathione synthetase from Prochlorococcus marinus (strain MIT 9313).